We begin with the raw amino-acid sequence, 220 residues long: Putative O-methyltransferase Mjls_4009 (220 aa).

S-adenosyl-L-methionine contacts are provided by residues Val47, Glu69, 71–72 (GT), Ser77, Asp95, and Val96. Asp143 lines the substrate pocket. S-adenosyl-L-methionine is bound at residue Asp145.

It belongs to the class I-like SAM-binding methyltransferase superfamily. Cation-dependent O-methyltransferase family.

This is Putative O-methyltransferase Mjls_4009 from Mycobacterium sp. (strain JLS).